Consider the following 227-residue polypeptide: MDSYEPSQLIWARLLLYEISKRNGETEYQHTNGPVWWGPNDNKTVYLSITDCSGFVNALLRKSFELSQKDMVEWFDSQRPLAVDYYNTIYHQNGFTRIKNIYKLEPGDFIAIKFPNHHPSLDDTGHIMMINSYPEIMASKNLPDEYQNYNNILQFRVNVIDQTATPHGRYDTRYSPDDNQNGLGSGYIKLYTNIDGTIIGYSWSLSKKSRYIDKTVHPIVVGRLDIY.

It is found in the virion. This is an uncharacterized protein from Acanthamoeba polyphaga (Amoeba).